The sequence spans 234 residues: Interleukin-34 (234 aa).

Positions 1 to 20 (MPWGLAWLYCLGILLDVALG) are cleaved as a signal peptide. Asn-99 is a glycosylation site (N-linked (GlcNAc...) asparagine). Residues 215–234 (PRQPPTSLPRSPSSNHGPLP) form a disordered region. Polar residues predominate over residues 222-234 (LPRSPSSNHGPLP).

This sequence belongs to the IL-34 family. Homodimer. Interacts with CSF1R.

The protein localises to the secreted. In terms of biological role, cytokine that promotes the proliferation, survival and differentiation of monocytes and macrophages. Promotes the release of pro-inflammatory chemokines, and thereby plays an important role in innate immunity and in inflammatory processes. Plays an important role in the regulation of osteoclast proliferation and differentiation, and in the regulation of bone resorption. Signaling via CSF1R and its downstream effectors stimulates phosphorylation of MAPK1/ERK2 AND MAPK3/ERK1. In Rattus norvegicus (Rat), this protein is Interleukin-34 (Il34).